A 543-amino-acid polypeptide reads, in one-letter code: Limonene hydroxylase (543 aa).

A Sigma-54 factor interaction domain is found at 232 to 464; that stretch reads VVTYNPSFEK…LRNVIERAFL (233 aa). Residues 260–267 and 324–333 each bind ATP; these read GETGSGKE and ADGGTLFLDE.

It catalyses the reaction (4S)-limonene + reduced [NADPH--hemoprotein reductase] + O2 = (1S,5R)-carveol + oxidized [NADPH--hemoprotein reductase] + H2O + H(+). The enzyme catalyses (4S)-limonene + reduced [NADPH--hemoprotein reductase] + O2 = (4S)-perillyl alcohol + oxidized [NADPH--hemoprotein reductase] + H2O + H(+). It carries out the reaction perillyl alcohol + NAD(+) = perillyl aldehyde + NADH + H(+). The catalysed reaction is (1S,5R)-carveol + NADP(+) = (R)-carvone + NADPH + H(+). In terms of biological role, involved in limonene hydroxylation to a mixture of carveol and perillyl alcohol as well as in dehydrogenation of these products to carvone and perillyl aldehyde. Aromatic alcohols containing an isopropyl or isopropenyl group at ring position 4 also served as substrates for the dehydrogenase activity. In Geobacillus stearothermophilus (Bacillus stearothermophilus), this protein is Limonene hydroxylase.